Reading from the N-terminus, the 59-residue chain is UPF0337 protein MM_2677 (59 aa).

2 stretches are compositionally biased toward basic and acidic residues: residues 1-24 and 33-59; these read MKEGTKEEMEGKFSKAKGEIKESA and MEAKGEAEKRKGEAQEKVGKIRKEFEK. The interval 1–59 is disordered; that stretch reads MKEGTKEEMEGKFSKAKGEIKESAGEMTGDIEMEAKGEAEKRKGEAQEKVGKIRKEFEK.

This sequence belongs to the UPF0337 (CsbD) family.

This Methanosarcina mazei (strain ATCC BAA-159 / DSM 3647 / Goe1 / Go1 / JCM 11833 / OCM 88) (Methanosarcina frisia) protein is UPF0337 protein MM_2677.